A 96-amino-acid polypeptide reads, in one-letter code: Myosuppressin (96 aa).

A signal peptide spans 1-24 (MALGNGYYCAVVCVVLACASVVLC). The propeptide occupies 25–80 (APAQLCAGAADDDPRAARFCQALNTFLELYAEAAGEQVPEYQALVRDYPQLLDTGM). Gln83 carries the post-translational modification Pyrrolidone carboxylic acid; partial. Residue Phe92 is modified to Phenylalanine amide. A propeptide is located at residue Arg96.

Belongs to the myosuppressin family. In terms of tissue distribution, expressed in corpora cardiaca (CC), corpora allata (CA), antennal lobe (AL) and gnathal ganglion (GNG) (at protein level). In its non-pyroglutamate form, expression in GNG detected in all animals, in AL, CC and in CA in most animals (at protein level). In its pyroglutamate form, expression in CC, CA and GNG detected in all animals, in AL in some animals (at protein level).

Its subcellular location is the secreted. In terms of biological role, myoinhibiting neuropeptide. The sequence is that of Myosuppressin from Agrotis ipsilon (Black cutworm moth).